The sequence spans 432 residues: Putative D-alanyl-D-alanine carboxypeptidase (432 aa).

The helical; Signal-anchor transmembrane segment at 7–25 (ATVLLTFSLSAFAVEYPVL) threads the bilayer.

Belongs to the peptidase S12 family. YfeW subfamily.

The protein localises to the cell inner membrane. It carries out the reaction Preferential cleavage: (Ac)2-L-Lys-D-Ala-|-D-Ala. Also transpeptidation of peptidyl-alanyl moieties that are N-acyl substituents of D-alanine.. This chain is Putative D-alanyl-D-alanine carboxypeptidase, found in Salmonella agona (strain SL483).